We begin with the raw amino-acid sequence, 92 residues long: Probable glutathione transferase (92 aa).

The GST N-terminal domain occupies 1 to 71 (RTCPYAQRAR…YLEEAFPDPP (71 aa)). The active-site Nucleophile is the cysteine 3. Residues lysine 30, valine 43, and 55–56 (ES) each bind glutathione.

It belongs to the GST superfamily. Omega family.

It carries out the reaction RX + glutathione = an S-substituted glutathione + a halide anion + H(+). It catalyses the reaction L-dehydroascorbate + 2 glutathione = glutathione disulfide + L-ascorbate. The enzyme catalyses methylarsonate + 2 glutathione + H(+) = methylarsonous acid + glutathione disulfide + H2O. Exhibits glutathione-dependent thiol transferase activity. Has dehydroascorbate reductase activity and may contribute to the recycling of ascorbic acid. Participates in the biotransformation of inorganic arsenic and reduces monomethylarsonic acid (MMA). The protein is Probable glutathione transferase of Aplysia californica (California sea hare).